Consider the following 131-residue polypeptide: UPF0212 protein TK1194 (131 aa).

The protein belongs to the UPF0212 family.

This Thermococcus kodakarensis (strain ATCC BAA-918 / JCM 12380 / KOD1) (Pyrococcus kodakaraensis (strain KOD1)) protein is UPF0212 protein TK1194.